An 88-amino-acid polypeptide reads, in one-letter code: UPF0297 protein STER_1937 (88 aa).

Belongs to the UPF0297 family.

This chain is UPF0297 protein STER_1937, found in Streptococcus thermophilus (strain ATCC BAA-491 / LMD-9).